The following is a 334-amino-acid chain: Fructose-1,6-bisphosphatase class 1 (334 aa).

Residues Glu92, Asp114, Leu116, and Asp117 each coordinate Mg(2+). Residues 117–120 (DGSS) and Asn209 each bind substrate. Glu281 provides a ligand contact to Mg(2+).

The protein belongs to the FBPase class 1 family. As to quaternary structure, homotetramer. It depends on Mg(2+) as a cofactor.

The protein localises to the cytoplasm. It catalyses the reaction beta-D-fructose 1,6-bisphosphate + H2O = beta-D-fructose 6-phosphate + phosphate. The protein operates within carbohydrate biosynthesis; gluconeogenesis. The chain is Fructose-1,6-bisphosphatase class 1 from Nitrosomonas europaea (strain ATCC 19718 / CIP 103999 / KCTC 2705 / NBRC 14298).